Reading from the N-terminus, the 586-residue chain is Arginine--tRNA ligase (586 aa).

Residues 128–138 carry the 'HIGH' region motif; sequence ANPTGPLHVGH.

Belongs to the class-I aminoacyl-tRNA synthetase family. As to quaternary structure, monomer.

The protein resides in the cytoplasm. The catalysed reaction is tRNA(Arg) + L-arginine + ATP = L-arginyl-tRNA(Arg) + AMP + diphosphate. The sequence is that of Arginine--tRNA ligase from Thioalkalivibrio sulfidiphilus (strain HL-EbGR7).